The following is a 246-amino-acid chain: uncharacterized protein (246 aa).

Residues 7 to 29 (GRGALASTGGCVVLAVAALMFVF) form a helical membrane-spanning segment.

It is found in the membrane. This is an uncharacterized protein from Treponema pallidum (strain Nichols).